Reading from the N-terminus, the 361-residue chain is MAAELAMGAELPSSPLAIEYVNDFDLMKFEVKKEPPEAERFCHRLPPGSLSSTPLSTPCSSVPSSPSFCAPSPGTGSSAGGGGSAAQAGGAPGPPSGGPGTVGGASGKAVLEDLYWMSGYQHHLNPEALNLTPEDAVEALIGSGHHSAHHGAHHPAAAAAYEAFRGQSFAGGGGGGADDMGAGHHHGAHHTAHHHHSAHHHHHHHHHHGGSGHHGGGAGHGGGGAGHHVRLEERFSDDQLVSMSVRELNRQLRGFSKEEVIRLKQKRRTLKNRGYAQSCRFKRVQQRHILESEKCQLQSQVEQLKLEVGRLAKERDLYKEKYEKLAGRGGPGGAGGAGFPREPSPAQAGPGAAKGAPDFFL.

At Ser14 the chain carries Phosphoserine. Residue Lys32 forms a Glycyl lysine isopeptide (Lys-Gly) (interchain with G-Cter in SUMO2) linkage. 2 disordered regions span residues 40 to 105 (RFCH…VGGA) and 175 to 228 (GGAD…AGHH). Residues 46–76 (PPGSLSSTPLSTPCSSVPSSPSFCAPSPGTG) are compositionally biased toward low complexity. Position 49 is a phosphoserine (Ser49). A phosphothreonine mark is found at Thr53 and Thr57. Phosphoserine is present on residues Ser61 and Ser65. Residues 183 to 211 (GHHHGAHHTAHHHHSAHHHHHHHHHHGGS) are compositionally biased toward basic residues. A compositionally biased stretch (gly residues) spans 212–226 (GHHGGGAGHGGGGAG). The segment at 262–287 (RLKQKRRTLKNRGYAQSCRFKRVQQR) is basic motif. Positions 262–325 (RLKQKRRTLK…DLYKEKYEKL (64 aa)) constitute a bZIP domain. Residues 290 to 311 (LESEKCQLQSQVEQLKLEVGRL) form a leucine-zipper region. The interval 324–361 (KLAGRGGPGGAGGAGFPREPSPAQAGPGAAKGAPDFFL) is disordered. The span at 327–338 (GRGGPGGAGGAG) shows a compositional bias: gly residues. Residues 345–361 (PAQAGPGAAKGAPDFFL) show a composition bias toward low complexity.

Belongs to the bZIP family. Forms homodimers. Monomers and dimers are able to bind DNA, but the off-rate is faster for monomers. Interacts with NEUROD1 and PDX1. May interact with MAFB, FOS, JUN and PCAF. Ubiquitinated, leading to its degradation by the proteasome. Post-translationally, phosphorylated at tyrosines.

It localises to the nucleus. Functionally, transcription factor that activates insulin gene expression. Acts synergistically with NEUROD1/BETA2 and PDX1. Binds the insulin enhancer C1/RIPE3b element. Binds to consensus TRE-type MARE 5'-TGCTGACTCAGCA-3' DNA sequence. The sequence is that of Transcription factor MafA (Mafa) from Rattus norvegicus (Rat).